Consider the following 236-residue polypeptide: Small ribosomal subunit protein uS2c (236 aa).

This sequence belongs to the universal ribosomal protein uS2 family.

Its subcellular location is the plastid. The protein resides in the chloroplast. This Buxus microphylla (Littleleaf boxwood) protein is Small ribosomal subunit protein uS2c (rps2).